Consider the following 169-residue polypeptide: Aspartic protease inhibitor 6 (169 aa).

The N-linked (GlcNAc...) asparagine glycan is linked to asparagine 1. Disulfide bonds link cysteine 30-cysteine 75 and cysteine 124-cysteine 134.

The protein belongs to the protease inhibitor I3 (leguminous Kunitz-type inhibitor) family.

It is found in the vacuole. Inhibitor of cathepsin D (aspartic protease). May also inhibit trypsin and chymotrypsin (serine proteases). Protects the plant by inhibiting proteases of invading organisms. This is Aspartic protease inhibitor 6 from Solanum tuberosum (Potato).